Consider the following 498-residue polypeptide: ATP synthase subunit beta, chloroplastic (498 aa).

172-179 (GGAGVGKT) is an ATP binding site.

Belongs to the ATPase alpha/beta chains family. In terms of assembly, F-type ATPases have 2 components, CF(1) - the catalytic core - and CF(0) - the membrane proton channel. CF(1) has five subunits: alpha(3), beta(3), gamma(1), delta(1), epsilon(1). CF(0) has four main subunits: a(1), b(1), b'(1) and c(9-12).

The protein resides in the plastid. Its subcellular location is the chloroplast thylakoid membrane. It carries out the reaction ATP + H2O + 4 H(+)(in) = ADP + phosphate + 5 H(+)(out). Its function is as follows. Produces ATP from ADP in the presence of a proton gradient across the membrane. The catalytic sites are hosted primarily by the beta subunits. In Calycanthus floridus var. glaucus (Eastern sweetshrub), this protein is ATP synthase subunit beta, chloroplastic.